We begin with the raw amino-acid sequence, 479 residues long: Glutamate--tRNA ligase 2 (479 aa).

Positions 18–28 (PSPTGFLHIGG) match the 'HIGH' region motif. The short motif at 244–248 (KLSKR) is the 'KMSKS' region element. Residue Lys-247 participates in ATP binding.

The protein belongs to the class-I aminoacyl-tRNA synthetase family. Glutamate--tRNA ligase type 1 subfamily. As to quaternary structure, monomer.

Its subcellular location is the cytoplasm. The enzyme catalyses tRNA(Glu) + L-glutamate + ATP = L-glutamyl-tRNA(Glu) + AMP + diphosphate. Its function is as follows. Catalyzes the attachment of glutamate to tRNA(Glu) in a two-step reaction: glutamate is first activated by ATP to form Glu-AMP and then transferred to the acceptor end of tRNA(Glu). This Maricaulis maris (strain MCS10) (Caulobacter maris) protein is Glutamate--tRNA ligase 2.